We begin with the raw amino-acid sequence, 497 residues long: Serine hydroxymethyltransferase (497 aa).

Residues Leu-176 and 180–182 each bind (6S)-5,6,7,8-tetrahydrofolate; that span reads GHL. Lys-289 carries the post-translational modification N6-(pyridoxal phosphate)lysine.

The protein belongs to the SHMT family. In terms of assembly, homodimer. It depends on pyridoxal 5'-phosphate as a cofactor.

The protein resides in the cytoplasm. The catalysed reaction is (6R)-5,10-methylene-5,6,7,8-tetrahydrofolate + glycine + H2O = (6S)-5,6,7,8-tetrahydrofolate + L-serine. It participates in one-carbon metabolism; tetrahydrofolate interconversion. Its pathway is amino-acid biosynthesis; glycine biosynthesis; glycine from L-serine: step 1/1. In terms of biological role, catalyzes the reversible interconversion of serine and glycine with tetrahydrofolate (THF) serving as the one-carbon carrier. This reaction serves as the major source of one-carbon groups required for the biosynthesis of purines, thymidylate, methionine, and other important biomolecules. Also exhibits THF-independent aldolase activity toward beta-hydroxyamino acids, producing glycine and aldehydes, via a retro-aldol mechanism. This chain is Serine hydroxymethyltransferase, found in Chlamydia muridarum (strain MoPn / Nigg).